The chain runs to 203 residues: Putative 3-methyladenine DNA glycosylase (203 aa).

The protein belongs to the DNA glycosylase MPG family.

This chain is Putative 3-methyladenine DNA glycosylase, found in Mycobacterium tuberculosis (strain ATCC 25177 / H37Ra).